We begin with the raw amino-acid sequence, 101 residues long: uncharacterized protein (101 aa).

It localises to the cytoplasm. This is an uncharacterized protein from Saccharomyces cerevisiae (strain ATCC 204508 / S288c) (Baker's yeast).